The chain runs to 131 residues: Glycine cleavage system H protein (131 aa).

Positions 24-106 constitute a Lipoyl-binding domain; the sequence is TVRVGITDYA…YGEGWLVELQ (83 aa). At lysine 65 the chain carries N6-lipoyllysine.

The protein belongs to the GcvH family. In terms of assembly, the glycine cleavage system is composed of four proteins: P, T, L and H. Requires (R)-lipoate as cofactor.

In terms of biological role, the glycine cleavage system catalyzes the degradation of glycine. The H protein shuttles the methylamine group of glycine from the P protein to the T protein. The sequence is that of Glycine cleavage system H protein from Mycolicibacterium gilvum (strain PYR-GCK) (Mycobacterium gilvum (strain PYR-GCK)).